The following is a 276-amino-acid chain: Halorhodopsin (276 aa).

Positions 1 to 20 are excised as a propeptide; that stretch reads MTAASTTATTVLQATQSDVL. Pyrrolidone carboxylic acid is present on Gln21. 7 consecutive transmembrane segments (helical) span residues 31–51, 61–81, 109–129, 134–154, 162–182, 195–215, and 220–240; these read SSIW…VAMG, LIWV…AGLA, YLTW…LADT, LFTA…AALI, WVFY…LLVQ, IFGT…ILWA, and GVAL…DILA. N6-(retinylidene)lysine is present on Lys241.

It belongs to the archaeal/bacterial/fungal opsin family. In terms of processing, the covalent binding of retinal to the apoprotein, bacterioopsin, generates bacteriorhodopsin.

It is found in the membrane. Its function is as follows. Light-driven chloride pump. The polypeptide is Halorhodopsin (hop) (Haloarcula marismortui (strain ATCC 43049 / DSM 3752 / JCM 8966 / VKM B-1809) (Halobacterium marismortui)).